The primary structure comprises 140 residues: Probable prefoldin subunit 6 (140 aa).

Belongs to the prefoldin subunit beta family. Heterohexamer of two PFD-alpha type and four PFD-beta type subunits.

Binds specifically to cytosolic chaperonin (c-CPN) and transfers target proteins to it. Binds to nascent polypeptide chain and promotes folding in an environment in which there are many competing pathways for nonnative proteins. This Dictyostelium discoideum (Social amoeba) protein is Probable prefoldin subunit 6 (pfdn6).